The primary structure comprises 365 residues: UPF0283 membrane protein Avi_2471 (365 aa).

Basic and acidic residues predominate over residues Met-1–Pro-10. A disordered region spans residues Met-1 to Asp-47. 2 consecutive transmembrane segments (helical) span residues Phe-83–Ile-103 and Leu-117–Ile-137.

Belongs to the UPF0283 family.

Its subcellular location is the cell inner membrane. The chain is UPF0283 membrane protein Avi_2471 from Allorhizobium ampelinum (strain ATCC BAA-846 / DSM 112012 / S4) (Agrobacterium vitis (strain S4)).